The following is a 138-amino-acid chain: Basic phospholipase A2 Tbo-G6D49 (138 aa).

The N-terminal stretch at 1 to 16 (MRTLWIMAVLLVGVEG) is a signal peptide. Disulfide bonds link Cys42-Cys131, Cys44-Cys60, Cys59-Cys111, Cys65-Cys138, Cys66-Cys104, Cys73-Cys97, and Cys91-Cys102. Tyr43, Gly45, and Gly47 together coordinate Ca(2+). Residue His63 is part of the active site. Ca(2+) is bound at residue Asp64. Asp105 is an active-site residue.

As to quaternary structure, monomer. It depends on Ca(2+) as a cofactor. Expressed by the venom gland.

The protein resides in the secreted. The catalysed reaction is a 1,2-diacyl-sn-glycero-3-phosphocholine + H2O = a 1-acyl-sn-glycero-3-phosphocholine + a fatty acid + H(+). In terms of biological role, snake venom phospholipase A2 (PLA2) that impairs hemostasis. It weakly inhibits ADP-induced platelet aggregation when tested on platelet rich plasma from human and rabbit blood (15-25% of inhibition at 5-10 ug of enzyme), and dose-dependently inhibits blood coagulation, possibly by inhibiting thrombin activation. Exhibits strong hydrolytic activities toward L-dipalmitoyl phosphatidylcholine. PLA2 catalyzes the calcium-dependent hydrolysis of the 2-acyl groups in 3-sn-phosphoglycerides. In Craspedocephalus borneensis (Borneo pit viper), this protein is Basic phospholipase A2 Tbo-G6D49.